The chain runs to 393 residues: MTEGRKPHINVGTIGHVDHGKTTLTAALTTVLARKLSGANKVVKYDEIDKAPEEKARGITISTAHVEYETEGRHYAHVDCPGHADYIKNMITGAAQMDVAILVVSATDGAMPQTREHILLAKQVGVKDIVVWINKCDVVEDEEMLSLVDMEIRELLSQYGYDGDSIDAVRGSAVKALEEDADGPWSDKIMELVGALEKIELPMREKDKPFLMSVEDVFSIPGRGTVVTGRIERGVVRVGDKIDIVGLRELQSTVCTGVEMFHKALEAGEAGDNAGILLRGIKKEDVERGQVLSAPGQMKSYKKFKAEVYVLKKEEGGRHTPFFANYQPQFYVRTTDVTGSISLPAGVEMVMPGDNLSIEVALDKPVAIDKGLRFAVREGGRTVGSGIITEILE.

In terms of domain architecture, tr-type G spans 6–204 (KPHINVGTIG…ALEKIELPMR (199 aa)). The G1 stretch occupies residues 15–22 (GHVDHGKT). Residue 15-22 (GHVDHGKT) participates in GTP binding. Thr22 contributes to the Mg(2+) binding site. A G2 region spans residues 58 to 62 (GITIS). Positions 79–82 (DCPG) are G3. Residues 79–83 (DCPGH) and 134–137 (NKCD) each bind GTP. A G4 region spans residues 134–137 (NKCD). Residues 172 to 174 (SAV) are G5.

Belongs to the TRAFAC class translation factor GTPase superfamily. Classic translation factor GTPase family. EF-Tu/EF-1A subfamily. As to quaternary structure, monomer.

It localises to the cytoplasm. It catalyses the reaction GTP + H2O = GDP + phosphate + H(+). GTP hydrolase that promotes the GTP-dependent binding of aminoacyl-tRNA to the A-site of ribosomes during protein biosynthesis. In Anaplasma phagocytophilum (strain HZ), this protein is Elongation factor Tu.